A 373-amino-acid polypeptide reads, in one-letter code: MNIILVNTLYYPYKIGGAEVSVQILAESLIEKGHSVTVVSIHEHNERKDTEHNGVKIIYLPYSNIYWGLSLTKRNPLSKILWHLIDLYNFKIAKEFENIIMDVKPDIVHTNNLSGISCAVWQKAKKYKCRVIHTSRDYYLIHPNCKLYKNGSEMSVKSIAVSLWSLSKKILGKNVDVYVGISNYIKDKHIEAGFFKSTEKYTIYNSVKSNVILDLTAANDKRLGFIGRLTYEKGFDQFCKLAQLNKTKKFIAAGEFDKNSASLKQLALDSNVELLGYCPVDDFMQKVDIIVLPIKWQEPFGRVVVEAIFAGKVVLTNRVGGITELSRILPNIYFLEDIQDIDSIPFPVEIDDSEKKIFNVDYVTEQYLKIYKG.

This is an uncharacterized protein from Klebsiella pneumoniae.